A 276-amino-acid chain; its full sequence is 2,3,4,5-tetrahydropyridine-2,6-dicarboxylate N-succinyltransferase (276 aa).

Residues Arg-100 and Asp-137 each coordinate substrate.

Belongs to the transferase hexapeptide repeat family. Homotrimer.

It is found in the cytoplasm. The catalysed reaction is (S)-2,3,4,5-tetrahydrodipicolinate + succinyl-CoA + H2O = (S)-2-succinylamino-6-oxoheptanedioate + CoA. It functions in the pathway amino-acid biosynthesis; L-lysine biosynthesis via DAP pathway; LL-2,6-diaminopimelate from (S)-tetrahydrodipicolinate (succinylase route): step 1/3. The sequence is that of 2,3,4,5-tetrahydropyridine-2,6-dicarboxylate N-succinyltransferase from Zymomonas mobilis subsp. mobilis (strain ATCC 31821 / ZM4 / CP4).